Reading from the N-terminus, the 836-residue chain is Pentatricopeptide repeat-containing protein At2g39620 (836 aa).

PPR repeat units follow at residues 1-35, 36-62, 63-98, 99-133, 134-164, 165-199, 200-230, 233-263, 264-298, 299-333, 334-364, 365-399, 400-434, 435-465, 466-500, 501-535, 536-566, 568-602, 603-637, 638-668, 669-703, 704-734, and 740-770; these read MPINYTNLLLMLRECKNFRCLLQVHGSLIVSGLKP, HNQLINAYSLFQRQDLSRVIFDSVRDP, GVVLWNSMIRGYTRAGLHREALGFFGYMSEEKGIDP, DKYSFTFALKACAGSMDFKKGLRIHDLIAEMGLES, DVYIGTALVEMYCKARDLVSARQVFDKMHVK, DVVTWNTMVSGLAQNGCSSAALLLFHDMRSCCVDI, DHVSLYNLIPAVSKLEKSDVCRCLHGLVIKK, IFAFSSGLIDMYCNCADLYAAESVFEEVWRK, DESSWGTMMAAYAHNGFFEEVLELFDLMRNYDVRM, NKVAAASALQAAAYVGDLVKGIAIHDYAVQQGLIG, DVSVATSLMSMYSKCGELEIAEQLFINIEDR, DVVSWSAMIASYEQAGQHDEAISLFRDMMRIHIKP, NAVTLTSVLQGCAGVAASRLGKSIHCYAIKADIES, ELETATAVISMYAKCGRFSPALKAFERLPIK, DAVAFNALAQGYTQIGDANKAFDVYKNMKLHGVCP, DSRTMVGMLQTCAFCSDYARGSCVYGQIIKHGFDS, ECHVAHALINMFTKCDALAAAIVLFDKCGFE, STVSWNIMMNGYLLHGQAEEAVATFRQMKVEKFQP, NAVTFVNIVRAAAELSALRVGMSVHSSLIQCGFCS, QTPVGNSLVDMYAKCGMIESSEKCFIEISNK, YIVSWNTMLSAYAAHGLASCAVSLFLSMQENELKP, DSVSFLSVLSACRHAGLVEEGKRIFEEMGER, and EVEHYACMVDLLGKAGLFGEAVEMMRRMRVK. The type E motif; degenerate stretch occupies residues 775 to 836; the sequence is VWGALLNSSR…KVPACSWIEV (62 aa).

It belongs to the PPR family. PCMP-E subfamily.

The chain is Pentatricopeptide repeat-containing protein At2g39620 (PCMP-E33) from Arabidopsis thaliana (Mouse-ear cress).